Here is a 136-residue protein sequence, read N- to C-terminus: Histone H3.3C (136 aa).

The interval 1 to 42 (MARTKQTARKSTGGKAPRKQLVTKAAKKCAPATGGVKKPHRY) is disordered. R3 carries the asymmetric dimethylarginine; by PRMT6 modification. T4 bears the Phosphothreonine; by HASPIN mark. An Allysine; alternate modification is found at K5. Position 5 is an N6,N6,N6-trimethyllysine; alternate (K5). The residue at position 5 (K5) is an N6,N6-dimethyllysine; alternate. Residue K5 is modified to N6-(2-hydroxyisobutyryl)lysine; alternate. K5 bears the N6-acetyllysine; alternate mark. K5 carries the post-translational modification N6-methyllysine; alternate. Q6 is subject to 5-glutamyl dopamine; alternate. Residue Q6 is modified to 5-glutamyl serotonin; alternate. Phosphothreonine; by PKC is present on T7. K10 is modified (N6-(2-hydroxyisobutyryl)lysine; alternate). The residue at position 10 (K10) is an N6-lactoyllysine; alternate. Position 10 is an N6-methylated lysine (K10). An ADP-ribosylserine; alternate modification is found at S11. S11 is subject to Phosphoserine; alternate; by AURKB, AURKC, RPS6KA3, RPS6KA4 and RPS6KA5. T12 carries the post-translational modification Phosphothreonine; by PKC. K15 carries the N6-(2-hydroxyisobutyryl)lysine; alternate modification. At K15 the chain carries N6-lactoyllysine; alternate. An N6-acetyllysine modification is found at K15. The residue at position 15 (K15) is an N6-glutaryllysine; alternate. At R18 the chain carries Asymmetric dimethylarginine. An N6-(2-hydroxyisobutyryl)lysine; alternate mark is found at K19, K24, K28, and K37. K19 bears the N6-acetyllysine; alternate mark. K19, K24, and K28 each carry N6-lactoyllysine; alternate. K19, K24, and K28 each carry N6-glutaryllysine; alternate. An N6-butyryllysine; alternate mark is found at K19 and K24. K19 is subject to N6-methylated lysine; alternate. N6-acetyllysine is present on K24. Residues K28 and K37 each carry the N6-acetyllysine; alternate modification. Residues K28 and K37 each carry the N6-methylated lysine; alternate modification. Phosphotyrosine is present on Y42. An N6-(2-hydroxyisobutyryl)lysine; alternate modification is found at K57. N6-lactoyllysine; alternate is present on K57. K57 bears the N6-glutaryllysine; alternate mark. K57 bears the N6-succinyllysine; alternate mark. A Phosphoserine modification is found at S58. N6-(2-hydroxyisobutyryl)lysine; alternate is present on residues K65 and K80. Residues K65 and K80 each carry the N6-methylated lysine modification. Position 80 is an N6-lactoyllysine; alternate (K80). An N6-glutaryllysine; alternate modification is found at K80. The residue at position 80 (K80) is an N6-succinyllysine; alternate. T81 bears the Phosphothreonine mark. An N6-acetyllysine; alternate mark is found at K116 and K123. 2 positions are modified to N6-glutaryllysine; alternate: K116 and K123. At K123 the chain carries N6-(2-hydroxyisobutyryl)lysine; alternate. The residue at position 123 (K123) is an N6-methylated lysine; alternate. The residue at position 123 (K123) is an N6-succinyllysine; alternate.

Belongs to the histone H3 family. In terms of assembly, the nucleosome is a histone octamer containing two molecules each of H2A, H2B, H3 and H4 assembled in one H3-H4 heterotetramer and two H2A-H2B heterodimers. The octamer wraps approximately 147 bp of DNA. Acetylation is generally linked to gene activation. Acetylation on Lys-19 (H3K18ac) and Lys-24 (H3K24ac) favors methylation at Arg-18 (H3R17me). Acetylation at Lys-123 (H3K122ac) by EP300/p300 plays a central role in chromatin structure: localizes at the surface of the histone octamer and stimulates transcription, possibly by promoting nucleosome instability. Post-translationally, asymmetric dimethylation at Arg-18 (H3R17me2a) is linked to gene activation. Asymmetric dimethylation at Arg-3 (H3R2me2a) by PRMT6 is linked to gene repression and is mutually exclusive with H3 Lys-5 methylation (H3K4me2 and H3K4me3). H3R2me2a is present at the 3' of genes regardless of their transcription state and is enriched on inactive promoters, while it is absent on active promoters. In terms of processing, methylation at Lys-5 (H3K4me) and Lys-80 (H3K79me) are linked to gene activation. Methylation at Lys-5 (H3K4me) facilitates subsequent acetylation of H3 and H4. Methylation at Lys-80 (H3K79me) is associated with DNA double-strand break (DSB) responses and is a specific target for TP53BP1. Methylation at Lys-10 (H3K9me) and Lys-28 (H3K27me) are linked to gene repression. Methylation at Lys-10 (H3K9me) is a specific target for HP1 proteins (CBX1, CBX3 and CBX5) and prevents subsequent phosphorylation at Ser-11 (H3S10ph) and acetylation of H3 and H4. Methylation at Lys-5 (H3K4me) and Lys-80 (H3K79me) require preliminary monoubiquitination of H2B at 'Lys-120'. Phosphorylated at Thr-4 (H3T3ph) by HASPIN during prophase and dephosphorylated during anaphase. Phosphorylation at Ser-11 (H3S10ph) by aurkb is crucial for chromosome condensation and cell-cycle progression during mitosis and meiosis. In addition phosphorylation at Ser-11 (H3S10ph) by rps6ka4 and rps6ka5 is important during interphase because it enables the transcription of genes following external stimulation, like mitogens, stress, growth factors or UV irradiation and result in the activation of genes, such as c-fos and c-jun. Phosphorylation at Ser-11 (H3S10ph), which is linked to gene activation, prevents methylation at Lys-10 (H3K9me) but facilitates acetylation of H3 and H4. Phosphorylation at Ser-11 (H3S10ph) by aurkb mediates the dissociation of HP1 proteins (cbx1, cbx3 and cbx5) from heterochromatin. Phosphorylation at Ser-11 (H3S10ph) is also an essential regulatory mechanism for neoplastic cell transformation. Phosphorylation at Thr-7 (H3T6ph) by prkcb is a specific tag for epigenetic transcriptional activation that prevents demethylation of Lys-5 (H3K4me) by lsd1/kdm1a. At centromeres, specifically phosphorylated at Thr-12 (H3T11ph) from prophase to early anaphase, by DAPK3 and PKN1. Phosphorylation at Thr-12 (H3T11ph) by PKN1 or isoform M2 of PKM (PKM2) is a specific tag for epigenetic transcriptional activation that promotes demethylation of Lys-10 (H3K9me) by kdm4c/jmjd2c. Phosphorylation at Tyr-42 (H3Y41ph) by jak2 promotes exclusion of cbx5 (HP1 alpha) from chromatin. Post-translationally, lysine deamination at Lys-5 (H3K4all) to form allysine only takes place on H3K4me3 and results in gene repression. In terms of processing, butyrylation of histones marks active promoters and competes with histone acetylation. It is present during late spermatogenesis. Succinylation at Lys-80 (H3K79succ) by KAT2A takes place with a maximum frequency around the transcription start sites of genes. It gives a specific tag for epigenetic transcription activation. Desuccinylation at Lys-123 (H3K122succ) by SIRT7 in response to DNA damage promotes chromatin condensation and double-strand breaks (DSBs) repair. Post-translationally, serine ADP-ribosylation constitutes the primary form of ADP-ribosylation of proteins in response to DNA damage. Serine ADP-ribosylation at Ser-11 (H3S10ADPr) is mutually exclusive with phosphorylation at Ser-11 (H3S10ph) and impairs acetylation at Lys-10 (H3K9ac).

It localises to the nucleus. The protein resides in the chromosome. In terms of biological role, core component of nucleosome. Nucleosomes wrap and compact DNA into chromatin, limiting DNA accessibility to the cellular machineries which require DNA as a template. Histones thereby play a central role in transcription regulation, DNA repair, DNA replication and chromosomal stability. DNA accessibility is regulated via a complex set of post-translational modifications of histones, also called histone code, and nucleosome remodeling. The chain is Histone H3.3C (h3-5) from Xenopus laevis (African clawed frog).